Consider the following 348-residue polypeptide: Ion-translocating oxidoreductase complex subunit D (348 aa).

3 helical membrane passes run Val-20–Phe-39, Tyr-67–Val-87, and Ala-124–Ala-144. Position 187 is an FMN phosphoryl threonine (Thr-187). A run of 4 helical transmembrane segments spans residues Trp-221 to Trp-241, Pro-244 to Ala-264, Phe-266 to Ile-286, and Leu-300 to Pro-320.

This sequence belongs to the NqrB/RnfD family. As to quaternary structure, the complex is composed of six subunits: RnfA, RnfB, RnfC, RnfD, RnfE and RnfG. Requires FMN as cofactor.

It is found in the cell inner membrane. Its function is as follows. Part of a membrane-bound complex that couples electron transfer with translocation of ions across the membrane. The chain is Ion-translocating oxidoreductase complex subunit D from Tolumonas auensis (strain DSM 9187 / NBRC 110442 / TA 4).